The following is a 133-amino-acid chain: uncharacterized protein (133 aa).

Residues 36–56 (LPMLIALACIFLLLATCLLFM) traverse the membrane as a helical segment. The disordered stretch occupies residues 105-133 (HGRPTVPRQPLPGPEDNRSHCDYMESTKM). The segment covering 119 to 133 (EDNRSHCDYMESTKM) has biased composition (basic and acidic residues).

It is found in the membrane. This is an uncharacterized protein from Homo sapiens (Human).